A 225-amino-acid chain; its full sequence is MEELKKIAGVRAAQYVEDGMIVGLGTGSTAYYFVEEVGRRVQEEGLQVIGVTTSSRTTAQAQALGIPLKSIDEVDSVDVTVDGADEVDPNFNGIKGGGGALLMEKIVGTLTKDYIWVVDESKMVDTLGAFRLPVEVVQYGAERLFREFEKKGYKPSFREYDGVRFVTDMKNFIIDLDLGSIPDPIAFGNMLDHQVGVVEHGLFNGMVNRVIVAGKDGVRILEANK.

Substrate is bound by residues 26 to 29, 82 to 85, and 95 to 98; these read TGST, DGAD, and KGGG. The active-site Proton acceptor is the E104. K122 is a substrate binding site.

It belongs to the ribose 5-phosphate isomerase family. As to quaternary structure, homodimer.

It catalyses the reaction aldehydo-D-ribose 5-phosphate = D-ribulose 5-phosphate. Its pathway is carbohydrate degradation; pentose phosphate pathway; D-ribose 5-phosphate from D-ribulose 5-phosphate (non-oxidative stage): step 1/1. Catalyzes the reversible conversion of ribose-5-phosphate to ribulose 5-phosphate. The polypeptide is Ribose-5-phosphate isomerase A (Streptococcus mutans serotype c (strain ATCC 700610 / UA159)).